The chain runs to 142 residues: Midkine (142 aa).

The signal sequence occupies residues 1-21; sequence MELRAFCVILLITFLAVSSQA. Intrachain disulfides connect C36/C60, C44/C69, C51/C73, C83/C115, and C93/C125.

Belongs to the pleiotrophin family.

It localises to the secreted. Functionally, secreted protein that functions as a cytokine and growth factor and mediates its signal through cell-surface proteoglycan and non-proteoglycan receptors. Binds cell-surface proteoglycan receptors via their chondroitin sulfate (CS) groups. Thereby regulates many processes like inflammatory response, cell proliferation, cell adhesion, cell growth, cell survival, tissue regeneration, cell differentiation and cell migration. Inhibits mesoderm formation and promotes neural formation during development. Plays a role in development of the neuromuscular junction (NMJ). Has antibacterial activity against both Gram-positive and Gram-negative bacteria. The sequence is that of Midkine from Xenopus tropicalis (Western clawed frog).